The following is a 61-amino-acid chain: Protein translocase subunit SecE (61 aa).

The chain crosses the membrane as a helical span at residues Val39–Phe59.

Belongs to the SecE/SEC61-gamma family. As to quaternary structure, component of the Sec protein translocase complex. Heterotrimer consisting of SecY (alpha), SecG (beta) and SecE (gamma) subunits. The heterotrimers can form oligomers, although 1 heterotrimer is thought to be able to translocate proteins. Interacts with the ribosome. May interact with SecDF, and other proteins may be involved.

The protein localises to the cell membrane. In terms of biological role, essential subunit of the Sec protein translocation channel SecYEG. Clamps together the 2 halves of SecY. May contact the channel plug during translocation. The sequence is that of Protein translocase subunit SecE from Methanosphaera stadtmanae (strain ATCC 43021 / DSM 3091 / JCM 11832 / MCB-3).